Consider the following 286-residue polypeptide: Shikimate dehydrogenase (NADP(+)) (286 aa).

Residues 19–21 (SLS) and threonine 66 each bind shikimate. Lysine 70 functions as the Proton acceptor in the catalytic mechanism. Shikimate-binding residues include asparagine 91 and aspartate 107. Residues 129-133 (GSGGA) and leucine 229 contribute to the NADP(+) site. Tyrosine 231 serves as a coordination point for shikimate. Glycine 252 is an NADP(+) binding site.

Belongs to the shikimate dehydrogenase family. As to quaternary structure, homodimer.

It carries out the reaction shikimate + NADP(+) = 3-dehydroshikimate + NADPH + H(+). The protein operates within metabolic intermediate biosynthesis; chorismate biosynthesis; chorismate from D-erythrose 4-phosphate and phosphoenolpyruvate: step 4/7. Its function is as follows. Involved in the biosynthesis of the chorismate, which leads to the biosynthesis of aromatic amino acids. Catalyzes the reversible NADPH linked reduction of 3-dehydroshikimate (DHSA) to yield shikimate (SA). This chain is Shikimate dehydrogenase (NADP(+)), found in Prochlorococcus marinus (strain MIT 9215).